The following is a 341-amino-acid chain: Geranylfarnesyl diphosphate synthase (341 aa).

Positions 47, 50, and 95 each coordinate isopentenyl diphosphate. Mg(2+)-binding residues include Asp102 and Asp106. An all-trans-polyprenyl diphosphate is bound at residue Arg111. Arg112 contributes to the isopentenyl diphosphate binding site. Positions 193, 194, and 231 each coordinate an all-trans-polyprenyl diphosphate.

It belongs to the FPP/GGPP synthase family. In terms of assembly, homodimer. Mg(2+) serves as cofactor.

It is found in the cytoplasm. The enzyme catalyses isopentenyl diphosphate + (2E,6E,10E)-geranylgeranyl diphosphate = (2E,6E,10E,14E)-geranylfarnesyl diphosphate + diphosphate. Functionally, probably involved in biosynthesis of the precursor for C25 (sesterterpanyl chain) moiety of C20-C25 diether (2-O-sesterterpanyl-3-O-phytanyl-sn-glycer) membrane lipid. Catalyzes the condensation of isopentenyl pyrophosphate with the allylic pyrophosphates to yield geranylfarnesyl diphosphate (GFPP). Geranylgeranyl diphosphate (GGPP) is the preferred substrate, but dimethylallyl diphosphate (DMAPP) and farnesyl diphosphate (FPP) can also be used as allylic substrate. In Natronomonas pharaonis (strain ATCC 35678 / DSM 2160 / CIP 103997 / JCM 8858 / NBRC 14720 / NCIMB 2260 / Gabara) (Halobacterium pharaonis), this protein is Geranylfarnesyl diphosphate synthase (idsA3).